Here is a 442-residue protein sequence, read N- to C-terminus: Transducin beta-like protein 2 (442 aa).

Positions E36–H71 are disordered. Residues S52 to K65 show a composition bias toward basic residues. WD repeat units lie at residues S84–H123, V130–F170, K182–N222, N224–Q263, G273–Q312, E323–Y362, and V366–V404. K164 is covalently cross-linked (Glycyl lysine isopeptide (Lys-Gly) (interchain with G-Cter in SUMO2)). The residue at position 428 (T428) is a Phosphothreonine.

In Mus musculus (Mouse), this protein is Transducin beta-like protein 2 (Tbl2).